A 559-amino-acid chain; its full sequence is Dihydroxy-acid dehydratase (559 aa).

D81 serves as a coordination point for Mg(2+). C122 contributes to the [2Fe-2S] cluster binding site. 2 residues coordinate Mg(2+): D123 and K124. An N6-carboxylysine modification is found at K124. [2Fe-2S] cluster is bound at residue C195. Mg(2+) is bound at residue E448. S474 functions as the Proton acceptor in the catalytic mechanism.

It belongs to the IlvD/Edd family. Homodimer. [2Fe-2S] cluster is required as a cofactor. It depends on Mg(2+) as a cofactor.

It carries out the reaction (2R)-2,3-dihydroxy-3-methylbutanoate = 3-methyl-2-oxobutanoate + H2O. The enzyme catalyses (2R,3R)-2,3-dihydroxy-3-methylpentanoate = (S)-3-methyl-2-oxopentanoate + H2O. It functions in the pathway amino-acid biosynthesis; L-isoleucine biosynthesis; L-isoleucine from 2-oxobutanoate: step 3/4. Its pathway is amino-acid biosynthesis; L-valine biosynthesis; L-valine from pyruvate: step 3/4. Its function is as follows. Functions in the biosynthesis of branched-chain amino acids. Catalyzes the dehydration of (2R,3R)-2,3-dihydroxy-3-methylpentanoate (2,3-dihydroxy-3-methylvalerate) into 2-oxo-3-methylpentanoate (2-oxo-3-methylvalerate) and of (2R)-2,3-dihydroxy-3-methylbutanoate (2,3-dihydroxyisovalerate) into 2-oxo-3-methylbutanoate (2-oxoisovalerate), the penultimate precursor to L-isoleucine and L-valine, respectively. The chain is Dihydroxy-acid dehydratase from Geobacillus kaustophilus (strain HTA426).